The chain runs to 200 residues: Pyridoxal 5'-phosphate synthase subunit PdxT (200 aa).

52-54 contacts L-glutamine; that stretch reads GES. C84 acts as the Nucleophile in catalysis. Residues R116 and 145–146 each bind L-glutamine; that span reads IR. Catalysis depends on charge relay system residues H181 and E183.

Belongs to the glutaminase PdxT/SNO family. In the presence of PdxS, forms a dodecamer of heterodimers. Only shows activity in the heterodimer.

The catalysed reaction is aldehydo-D-ribose 5-phosphate + D-glyceraldehyde 3-phosphate + L-glutamine = pyridoxal 5'-phosphate + L-glutamate + phosphate + 3 H2O + H(+). It carries out the reaction L-glutamine + H2O = L-glutamate + NH4(+). Its pathway is cofactor biosynthesis; pyridoxal 5'-phosphate biosynthesis. Functionally, catalyzes the hydrolysis of glutamine to glutamate and ammonia as part of the biosynthesis of pyridoxal 5'-phosphate. The resulting ammonia molecule is channeled to the active site of PdxS. The sequence is that of Pyridoxal 5'-phosphate synthase subunit PdxT from Saccharolobus islandicus (strain L.S.2.15 / Lassen #1) (Sulfolobus islandicus).